Reading from the N-terminus, the 1155-residue chain is Polarized growth protein rax2 (1155 aa).

A signal peptide spans 1–27 (MAIYSSFWIRLYFTFRFFCYFLTSVVA). The Extracellular portion of the chain corresponds to 28–1105 (SDVSFLGDFS…KYDHIGQPRY (1078 aa)). Residues asparagine 44, asparagine 61, asparagine 103, asparagine 118, asparagine 124, asparagine 156, asparagine 161, asparagine 182, asparagine 190, asparagine 213, asparagine 224, asparagine 306, asparagine 391, asparagine 413, asparagine 419, asparagine 510, asparagine 519, asparagine 554, asparagine 562, asparagine 607, asparagine 630, asparagine 713, asparagine 722, asparagine 743, asparagine 769, asparagine 793, asparagine 807, asparagine 824, asparagine 840, asparagine 848, asparagine 876, asparagine 893, asparagine 899, asparagine 916, asparagine 945, asparagine 1009, asparagine 1030, and asparagine 1055 are each glycosylated (N-linked (GlcNAc...) asparagine). Residues 1106–1126 (VVIISLGISIGVMFLIMSGSI) form a helical membrane-spanning segment. Over 1127-1155 (VVEIIHWFFSEHVETLHDYSNFLKELKTQ) the chain is Cytoplasmic.

This sequence belongs to the RAX2 family. Interacts with for3 and tea1.

The protein localises to the cell membrane. Its function is as follows. Controls cell polarity, through the G1 phase of mitosis, via regulation of for3 localization. Required for actin cable formation where it directs the spatial distribution of the actin cables. This is Polarized growth protein rax2 from Schizosaccharomyces pombe (strain 972 / ATCC 24843) (Fission yeast).